A 302-amino-acid polypeptide reads, in one-letter code: Troponin T, cardiac muscle isoforms (302 aa).

A compositionally biased stretch (acidic residues) spans 1-55; it reads MSDSEEVVEEYEQEQEEEYVEEEEEEWLEEDDGQEDQVDEEEEETEETTAEEQED. 3 disordered regions span residues 1–99, 138–230, and 280–302; these read MSDS…GERL, KDRI…RKPL, and SDHQ…GRWK. At S2 the chain carries N-acetylserine. A Phosphoserine; by CK2 modification is found at S2. The span at 65–79 shows a compositional bias: basic and acidic residues; the sequence is EGDREQEPGEGESKP. Pro residues predominate over residues 82-93; it reads KPFMPNLVPPKI. Composition is skewed to basic and acidic residues over residues 138 to 186 and 204 to 230; these read KDRI…EKEA and KSEK…RKPL.

This sequence belongs to the troponin T family.

Troponin T is the tropomyosin-binding subunit of troponin, the thin filament regulatory complex which confers calcium-sensitivity to striated muscle actomyosin ATPase activity. The chain is Troponin T, cardiac muscle isoforms (TNNT2) from Gallus gallus (Chicken).